A 199-amino-acid chain; its full sequence is Small ribosomal subunit protein eS6 (199 aa).

Residues 172–183 (KEQREKRSESLA) are compositionally biased toward basic and acidic residues. The interval 172 to 199 (KEQREKRSESLAKKRSRLSAASKPSIAA) is disordered.

This sequence belongs to the eukaryotic ribosomal protein eS6 family. Post-translationally, ribosomal protein S6 is the major substrate of protein kinases in eukaryote ribosomes.

Component of the 40S small ribosomal subunit. Plays an important role in controlling cell growth and proliferation through the selective translation of particular classes of mRNA. The sequence is that of Small ribosomal subunit protein eS6 (RPS6) from Nicotiana tabacum (Common tobacco).